Reading from the N-terminus, the 201-residue chain is Adenylyl-sulfate kinase (201 aa).

35-42 (GLSGSGKS) is an ATP binding site. Catalysis depends on Ser-109, which acts as the Phosphoserine intermediate.

This sequence belongs to the APS kinase family.

It catalyses the reaction adenosine 5'-phosphosulfate + ATP = 3'-phosphoadenylyl sulfate + ADP + H(+). The protein operates within sulfur metabolism; hydrogen sulfide biosynthesis; sulfite from sulfate: step 2/3. In terms of biological role, catalyzes the synthesis of activated sulfate. The sequence is that of Adenylyl-sulfate kinase from Salmonella typhi.